The following is a 145-amino-acid chain: Hemoglobin subunit beta (145 aa).

A Globin domain is found at 1 to 145; the sequence is MLTSEEKAAV…VANALAHRYH (145 aa). Threonine 11 carries the phosphothreonine modification. Lysine 58 is modified (N6-acetyllysine). Histidine 62 contributes to the heme b binding site. N6-acetyllysine is present on lysine 81. Histidine 91 lines the heme b pocket. The residue at position 92 (cysteine 92) is an S-nitrosocysteine.

It belongs to the globin family. In terms of assembly, heterotetramer of two alpha chains and two beta chains. In terms of tissue distribution, red blood cells.

Its function is as follows. Involved in oxygen transport from the lung to the various peripheral tissues. In Rangifer tarandus (Reindeer), this protein is Hemoglobin subunit beta (HBB).